The sequence spans 161 residues: MPSMDIVSEVNEVELRNAVDNSVRELKGRFDFRGKEASIEYKDHVVTLTAEDDFQCRQLVDILRMQMSKRDVDPKSMDVDDKAVHSGKTFSLKVKFKEGIETLVAKKLVKLIKDSKLKVQVSIQGDSVRVTGKKRDDLQQVMALARESELGQPFQFNNFRD.

It belongs to the YajQ family.

Its function is as follows. Nucleotide-binding protein. The protein is Nucleotide-binding protein Spea_3114 of Shewanella pealeana (strain ATCC 700345 / ANG-SQ1).